Consider the following 485-residue polypeptide: Calcium/manganese antiporter SLC30A10 (485 aa).

Residues 1–10 (MGRYSGKTCR) lie on the Cytoplasmic side of the membrane. Residues 11–31 (LLFMLVLTVAFFVAELVSGYL) form a helical membrane-spanning segment. Residues 32 to 40 (GNSIALLSD) are Extracellular-facing. The helical transmembrane segment at 41-61 (SFNMLSDLISLCVGLSAGYIA) threads the bilayer. The Cytoplasmic portion of the chain corresponds to 62-81 (RRPTRGFSATYGYARAEVVG). The helical transmembrane segment at 82–102 (ALSNAVFLTALCFTIFVEAVL) threads the bilayer. The Extracellular segment spans residues 103–113 (RLARPERIDDP). The chain crosses the membrane as a helical span at residues 114-134 (ELVLIVGVLGLLVNVVGLLIF). Residues 135-244 (QDCAAWFACC…ALNIRGVLLH (110 aa)) lie on the Cytoplasmic side of the membrane. Residues 167–196 (FGGPQGAEDPRRAADPTAPGSDSAVTLRGT) are disordered. Residues 245–265 (VMGDALGSVVVVITAIIFYVL) traverse the membrane as a helical segment. Topologically, residues 266–278 (PLKSEDPCNWQCY) are extracellular. The helical transmembrane segment at 279 to 299 (IDPSLTVLMVIIILSSAFPLI) threads the bilayer. Residues 300–485 (KETAAILLQM…DQCYVNRTHF (186 aa)) lie on the Cytoplasmic side of the membrane. The required for plasma membrane localization stretch occupies residues 308-485 (QMVPKGVNME…DQCYVNRTHF (178 aa)).

Belongs to the cation diffusion facilitator (CDF) transporter (TC 2.A.4) family. SLC30A subfamily. In terms of assembly, forms homodimers. Forms heterodimers and high-molecular weight oligomers with SLC30A3, SLC30A2 and SLC30A4; heterodimerization is mediated by covalent-bound tyrosine residues, occurs probably in a tissue-specific manner and could mediate the intracellular zinc transport activity into early endosomes and recycling endosomes. As to expression, specifically expressed in fetal liver and fetal brain. Expressed in adult tissues with relative levels small intestine &gt; liver &gt; testes &gt; brain &gt; ovary &gt; colon &gt; cervix &gt; prostate &gt; placenta. Expressed in liver and neurons of the nervous system (at protein level).

The protein resides in the cell membrane. The protein localises to the golgi apparatus membrane. Its subcellular location is the recycling endosome membrane. It localises to the early endosome membrane. It catalyses the reaction Mn(2+)(out) + Ca(2+)(in) = Mn(2+)(in) + Ca(2+)(out). It carries out the reaction Zn(2+)(in) = Zn(2+)(out). Its function is as follows. Calcium:manganese antiporter of the plasma membrane mediating the efflux of intracellular manganese coupled to an active extracellular calcium exchange. Required for intracellular manganese homeostasis, an essential cation for the function of several enzymes, including some crucially important for the metabolism of neurotransmitters and other neuronal metabolic pathways. Manganese can also be cytotoxic and induce oxidative stress, mitochondrial dysfunction and apoptosis. Could also have an intracellular zinc ion transporter activity, directly regulating intracellular zinc ion homeostasis and more indirectly various signaling pathway and biological processes. This chain is Calcium/manganese antiporter SLC30A10, found in Homo sapiens (Human).